A 286-amino-acid polypeptide reads, in one-letter code: Putative thiosulfate sulfurtransferase (286 aa).

One can recognise a Rhodanese 1 domain in the interval 27 to 134 (DDPAYRLVEV…WVDNDYPTTD (108 aa)). Glycyl lysine isopeptide (Lys-Gly) (interchain with G-Cter in SAMP2) cross-links involve residues Lys162 and Lys166. The Rhodanese 2 domain occupies 164–283 (VDKGLPLVDV…WGNLVGAPVE (120 aa)). Cys242 functions as the Cysteine persulfide intermediate in the catalytic mechanism. Substrate is bound at residue Arg247.

It catalyses the reaction thiosulfate + hydrogen cyanide = thiocyanate + sulfite + 2 H(+). In terms of biological role, may be a sulfotransferase involved in the formation of thiosulfate. This Haloferax volcanii (strain ATCC 29605 / DSM 3757 / JCM 8879 / NBRC 14742 / NCIMB 2012 / VKM B-1768 / DS2) (Halobacterium volcanii) protein is Putative thiosulfate sulfurtransferase (tssA).